Here is a 436-residue protein sequence, read N- to C-terminus: Trigger factor (436 aa).

The PPIase FKBP-type domain occupies Gly163–Pro248.

It belongs to the FKBP-type PPIase family. Tig subfamily.

The protein localises to the cytoplasm. It carries out the reaction [protein]-peptidylproline (omega=180) = [protein]-peptidylproline (omega=0). In terms of biological role, involved in protein export. Acts as a chaperone by maintaining the newly synthesized protein in an open conformation. Functions as a peptidyl-prolyl cis-trans isomerase. This Acidovorax ebreus (strain TPSY) (Diaphorobacter sp. (strain TPSY)) protein is Trigger factor.